The following is a 318-amino-acid chain: COP9 signalosome complex subunit 6 (318 aa).

Residues 32–165 (VALHPLVILN…VSVYESVIDI (134 aa)) form the MPN domain.

Belongs to the peptidase M67A family. CSN6 subfamily. Component of the CSN complex, probably composed of cops1, cops2, cops3, cops4, cops5, cops6, cops7, cops8 and cops9.

It localises to the cytoplasm. It is found in the nucleus. Component of the COP9 signalosome complex (CSN), a complex involved in various cellular and developmental processes. The CSN complex is an essential regulator of the ubiquitin (Ubl) conjugation pathway by mediating the deneddylation of the cullin subunits of E3 ligase complexes, leading to modify the Ubl ligase activity. The polypeptide is COP9 signalosome complex subunit 6 (cops6) (Xenopus laevis (African clawed frog)).